The chain runs to 114 residues: Immunoglobulin kappa variable 6D-21 (114 aa).

Positions 1-19 (MSPSQLIGFLLLWVPASRG) are cleaved as a signal peptide. The framework-1 stretch occupies residues 20 to 42 (EIVLTQSPDFQSVTPKEKVTITC). The region spanning 20 to 114 (EIVLTQSPDF…YYCHQSSSLP (95 aa)) is the Ig-like domain. The cysteines at positions 42 and 107 are disulfide-linked. Residues 43–53 (RASQSIGSSLH) are complementarity-determining-1. The tract at residues 54–68 (WYQQKPDQSPKLLIK) is framework-2. The interval 69 to 75 (YASQSIS) is complementarity-determining-2. A framework-3 region spans residues 76–107 (GVPSRFSGSGSGTDFTLTINSLEAEDAAAYYC). Residues 108–114 (HQSSSLP) are complementarity-determining-3.

In terms of assembly, immunoglobulins are composed of two identical heavy chains and two identical light chains; disulfide-linked.

Its subcellular location is the secreted. It is found in the cell membrane. V region of the variable domain of immunoglobulin light chains that participates in the antigen recognition. Immunoglobulins, also known as antibodies, are membrane-bound or secreted glycoproteins produced by B lymphocytes. In the recognition phase of humoral immunity, the membrane-bound immunoglobulins serve as receptors which, upon binding of a specific antigen, trigger the clonal expansion and differentiation of B lymphocytes into immunoglobulins-secreting plasma cells. Secreted immunoglobulins mediate the effector phase of humoral immunity, which results in the elimination of bound antigens. The antigen binding site is formed by the variable domain of one heavy chain, together with that of its associated light chain. Thus, each immunoglobulin has two antigen binding sites with remarkable affinity for a particular antigen. The variable domains are assembled by a process called V-(D)-J rearrangement and can then be subjected to somatic hypermutations which, after exposure to antigen and selection, allow affinity maturation for a particular antigen. In Homo sapiens (Human), this protein is Immunoglobulin kappa variable 6D-21.